The chain runs to 228 residues: ATP synthase subunit a (228 aa).

The next 6 helical transmembrane spans lie at 19–39 (AIYI…AVAV), 81–101 (LIAT…IPGF), 107–127 (SLNL…FEGI), 136–156 (FAGF…IEVI), 178–198 (LFLL…PYAL), and 204–224 (ILQA…AVVV).

It belongs to the ATPase A chain family. In terms of assembly, F-type ATPases have 2 components, CF(1) - the catalytic core - and CF(0) - the membrane proton channel. CF(1) has five subunits: alpha(3), beta(3), gamma(1), delta(1), epsilon(1). CF(0) has three main subunits: a(1), b(2) and c(9-12). The alpha and beta chains form an alternating ring which encloses part of the gamma chain. CF(1) is attached to CF(0) by a central stalk formed by the gamma and epsilon chains, while a peripheral stalk is formed by the delta and b chains.

The protein resides in the cell inner membrane. Functionally, key component of the proton channel; it plays a direct role in the translocation of protons across the membrane. In Campylobacter hominis (strain ATCC BAA-381 / DSM 21671 / CCUG 45161 / LMG 19568 / NCTC 13146 / CH001A), this protein is ATP synthase subunit a.